The sequence spans 201 residues: Adenylyl-sulfate kinase (201 aa).

The segment at 1-23 (MALHDENVVWHSHPVTPQQREQH) is disordered. ATP is bound at residue 35–42 (GLSGSGKS). Residue Ser109 is the Phosphoserine intermediate of the active site.

The protein belongs to the APS kinase family.

The enzyme catalyses adenosine 5'-phosphosulfate + ATP = 3'-phosphoadenylyl sulfate + ADP + H(+). It participates in sulfur metabolism; hydrogen sulfide biosynthesis; sulfite from sulfate: step 2/3. Catalyzes the synthesis of activated sulfate. This chain is Adenylyl-sulfate kinase, found in Escherichia coli O6:K15:H31 (strain 536 / UPEC).